The primary structure comprises 412 residues: Peptidase T (412 aa).

H84 provides a ligand contact to Zn(2+). The active site involves D86. D146 serves as a coordination point for Zn(2+). The Proton acceptor role is filled by E179. E180, D202, and H385 together coordinate Zn(2+).

It belongs to the peptidase M20B family. Zn(2+) is required as a cofactor.

It localises to the cytoplasm. The catalysed reaction is Release of the N-terminal residue from a tripeptide.. Cleaves the N-terminal amino acid of tripeptides. The sequence is that of Peptidase T from Haemophilus influenzae (strain PittGG).